The chain runs to 420 residues: Synaptosomal-associated protein 47 (420 aa).

2 consecutive t-SNARE coiled-coil homology domains span residues 110-172 (AEAA…LTEL) and 357-419 (TSEP…MKKL). The disordered stretch occupies residues 338 to 357 (ATHCEPSSGSQEGRPLQLQT). Polar residues predominate over residues 342-357 (EPSSGSQEGRPLQLQT).

This sequence belongs to the SVAP1 family. Forms a complex containing SNAP47, VAMP2 and STX1A. Associates with the BLOC-1 complex. Interacts with BLOC1S6.

It localises to the endomembrane system. The protein localises to the cytoplasm. Its subcellular location is the perinuclear region. Functionally, may play a role in intracellular membrane fusion. In Bos taurus (Bovine), this protein is Synaptosomal-associated protein 47 (SNAP47).